Consider the following 489-residue polypeptide: CDK5RAP3 protein homolog (489 aa).

This sequence belongs to the CDK5RAP3 family.

In terms of biological role, substrate adapter of E3 ligase complexes mediating ufmylation, the covalent attachment of the ubiquitin-like modifier UFM1 to substrate proteins, and which is involved in various processes, such as ribosome recycling and reticulophagy (also called ER-phagy). This chain is CDK5RAP3 protein homolog, found in Caenorhabditis elegans.